A 647-amino-acid chain; its full sequence is Threonine--tRNA ligase (647 aa).

Residues 1-61 enclose the TGS domain; that stretch reads MIKITFPDGA…EEDGSIEIVT (61 aa). Positions 240–538 are catalytic; that stretch reads DHRKLGKELD…LIETYKGAFP (299 aa). Zn(2+) is bound by residues Cys334, His385, and His515.

This sequence belongs to the class-II aminoacyl-tRNA synthetase family. In terms of assembly, homodimer. Zn(2+) is required as a cofactor.

It is found in the cytoplasm. The enzyme catalyses tRNA(Thr) + L-threonine + ATP = L-threonyl-tRNA(Thr) + AMP + diphosphate + H(+). In terms of biological role, catalyzes the attachment of threonine to tRNA(Thr) in a two-step reaction: L-threonine is first activated by ATP to form Thr-AMP and then transferred to the acceptor end of tRNA(Thr). Also edits incorrectly charged L-seryl-tRNA(Thr). The polypeptide is Threonine--tRNA ligase (Streptococcus agalactiae serotype III (strain NEM316)).